Consider the following 418-residue polypeptide: RuvB-like helicase 2 (418 aa).

65 to 72 (GDRGSGKT) provides a ligand contact to ATP.

The protein belongs to the RuvB family. As to quaternary structure, component of the SWR1 chromatin remodeling complex, the INO80 chromatin remodeling complex, and of the R2TP complex.

The protein resides in the nucleus. The catalysed reaction is ATP + H2O = ADP + phosphate + H(+). Its function is as follows. DNA helicase which participates in several chromatin remodeling complexes, including the SWR1 and the INO80 complexes. The SWR1 complex mediates the ATP-dependent exchange of histone H2A for the H2A variant HZT1 leading to transcriptional regulation of selected genes by chromatin remodeling. The INO80 complex remodels chromatin by shifting nucleosomes and is involved in DNA repair. Also involved in pre-rRNA processing. This is RuvB-like helicase 2 (RVB2) from Encephalitozoon cuniculi (strain GB-M1) (Microsporidian parasite).